Reading from the N-terminus, the 167-residue chain is Sulfopyruvate decarboxylase subunit alpha (167 aa).

The protein belongs to the ComD family. As to quaternary structure, heterododecamer composed of 6 subunits alpha and 6 subunits beta.

The catalysed reaction is 3-sulfopyruvate + H(+) = sulfoacetaldehyde + CO2. It participates in cofactor biosynthesis; coenzyme M biosynthesis; sulfoacetaldehyde from phosphoenolpyruvate and sulfite: step 4/4. Functionally, involved in the biosynthesis of the coenzyme M (2-mercaptoethanesulfonic acid). Catalyzes the decarboxylation of sulfopyruvate to sulfoacetaldehyde. The protein is Sulfopyruvate decarboxylase subunit alpha (comD) of Methanococcus maripaludis (strain DSM 14266 / JCM 13030 / NBRC 101832 / S2 / LL).